Here is a 54-residue protein sequence, read N- to C-terminus: Ovomucoid (54 aa).

The Kazal-like domain maps to 4–54 (VDCSDYPKPACSLDYMPLCGSDSKTYSNKCNFCNAVVDSNGTLTLSHFEKC). Intrachain disulfides connect Cys6-Cys36, Cys14-Cys33, and Cys22-Cys54. N-linked (GlcNAc...) asparagine glycosylation is present at Asn43.

It is found in the secreted. The protein is Ovomucoid of Chroicocephalus ridibundus (Black-headed gull).